A 273-amino-acid polypeptide reads, in one-letter code: Shikimate dehydrogenase (NADP(+)) (273 aa).

Residues 14–16 (SLS) and threonine 59 each bind shikimate. Lysine 63 serves as the catalytic Proton acceptor. Shikimate-binding residues include asparagine 84 and aspartate 99. NADP(+) contacts are provided by residues 122–126 (GAGGA) and methionine 212. Position 214 (tyrosine 214) interacts with shikimate. An NADP(+)-binding site is contributed by glycine 235.

The protein belongs to the shikimate dehydrogenase family. Homodimer.

It carries out the reaction shikimate + NADP(+) = 3-dehydroshikimate + NADPH + H(+). It functions in the pathway metabolic intermediate biosynthesis; chorismate biosynthesis; chorismate from D-erythrose 4-phosphate and phosphoenolpyruvate: step 4/7. In terms of biological role, involved in the biosynthesis of the chorismate, which leads to the biosynthesis of aromatic amino acids. Catalyzes the reversible NADPH linked reduction of 3-dehydroshikimate (DHSA) to yield shikimate (SA). The protein is Shikimate dehydrogenase (NADP(+)) of Aeropyrum pernix (strain ATCC 700893 / DSM 11879 / JCM 9820 / NBRC 100138 / K1).